The chain runs to 347 residues: Endophilin-A3 (347 aa).

Positions 1 to 21 are membrane-binding amphipathic helix; that stretch reads MSVAGLKKQFHKASQLFSEKI. In terms of domain architecture, BAR spans 18 to 249; the sequence is SEKISGAEGT…LQMRISAASS (232 aa). The tract at residues 60-87 is required for dimerization upon membrane association; the sequence is PNPAYRAKLGMLNTVSKIRGQVKTTGYP. The stretch at 181 to 201 forms a coiled coil; it reads EEVRQAVEKFEESKELAERSM. An interaction with ARC region spans residues 218-254; it reads FIEAALDYHRQSTEILQELQSKLQMRISAASSVPRRE. Residues 248–271 form a disordered region; it reads SSVPRREYKPRPVKRSSSELNGVS. Ser-265 is subject to Phosphoserine. The SH3 domain maps to 285–344; it reads MDQPCCRGLYDFEPENQGELGFKEGDIITLTNQIDENWYEGMIHGESGFFPINYVEVIVP.

The protein belongs to the endophilin family. Interacts with ARC. Interacts with DNM1, SGIP1 and SYNJ1. Interacts with the huntingtin exon 1 protein (HDEX1P) containing a glutamine repeat in the pathological range and promotes formation of insoluble polyglutamine-containing aggregates in vivo. Interacts with DYDC1. Interacts with FASLG. Interacts with ATXN2. Interacts with BIN2. As to expression, brain and testis.

Its subcellular location is the cytoplasm. The protein resides in the early endosome membrane. Functionally, implicated in endocytosis. May recruit other proteins to membranes with high curvature. The protein is Endophilin-A3 (SH3GL3) of Homo sapiens (Human).